Reading from the N-terminus, the 208-residue chain is Ribonuclease HII (208 aa).

Residues 13–202 (DLVAGVDEVG…VRQAYEAREA (190 aa)) enclose the RNase H type-2 domain. Positions 19, 20, and 111 each coordinate a divalent metal cation.

It belongs to the RNase HII family. Mn(2+) is required as a cofactor. The cofactor is Mg(2+).

The protein resides in the cytoplasm. It carries out the reaction Endonucleolytic cleavage to 5'-phosphomonoester.. Its function is as follows. Endonuclease that specifically degrades the RNA of RNA-DNA hybrids. The sequence is that of Ribonuclease HII from Pseudomonas fluorescens (strain ATCC BAA-477 / NRRL B-23932 / Pf-5).